A 312-amino-acid chain; its full sequence is Pantothenate kinase (312 aa).

ATP is bound at residue 97-104 (GSVAVGKS).

This sequence belongs to the prokaryotic pantothenate kinase family.

It is found in the cytoplasm. It catalyses the reaction (R)-pantothenate + ATP = (R)-4'-phosphopantothenate + ADP + H(+). It functions in the pathway cofactor biosynthesis; coenzyme A biosynthesis; CoA from (R)-pantothenate: step 1/5. The chain is Pantothenate kinase from Mycobacterium bovis (strain BCG / Pasteur 1173P2).